The chain runs to 304 residues: Nod factor export ATP-binding protein I (304 aa).

The ABC transporter domain maps to 6–236; the sequence is IEFDKVKKSY…EIGCDVIEIF (231 aa). 38–45 provides a ligand contact to ATP; the sequence is GPNGAGKT.

The protein belongs to the ABC transporter superfamily. Lipooligosaccharide exporter (TC 3.A.1.102) family. The complex is composed of two ATP-binding proteins (NodI) and two transmembrane proteins (NodJ).

It is found in the cell inner membrane. Its function is as follows. Part of the ABC transporter complex NodIJ involved in the export of the nodulation factors (Nod factors), the bacterial signal molecules that induce symbiosis and subsequent nodulation induction. Nod factors are LCO (lipo-chitin oligosaccharide), a modified beta-1,4-linked N-acetylglucosamine oligosaccharide. This subunit is responsible for energy coupling to the transport system. This Paraburkholderia xenovorans (strain LB400) protein is Nod factor export ATP-binding protein I.